Reading from the N-terminus, the 195-residue chain is MIASVRGEVIDIALDHAVIEAAGVGYKVMATPSTLATLRRGTEARLITAMIVREDSMTLYGFVDGDARDLFLTLLGVSGVGPKIALATLAVYDPQALRQALADGDVTALTRVPGIGKRGAERMVLELRDKIGPVSAGGGAAVGGHAIRGPVVEALVGLGFAAKQAEEATDKVLANDPEATTSSALRAALSMLGKK.

Residues 1 to 63 are domain I; it reads MIASVRGEVI…EDSMTLYGFV (63 aa). The interval 64-142 is domain II; the sequence is DGDARDLFLT…PVSAGGGAAV (79 aa). The interval 143–150 is flexible linker; it reads GGHAIRGP. The tract at residues 150–195 is domain III; sequence PVVEALVGLGFAAKQAEEATDKVLANDPEATTSSALRAALSMLGKK.

The protein belongs to the RuvA family. As to quaternary structure, homotetramer. Forms an RuvA(8)-RuvB(12)-Holliday junction (HJ) complex. HJ DNA is sandwiched between 2 RuvA tetramers; dsDNA enters through RuvA and exits via RuvB. An RuvB hexamer assembles on each DNA strand where it exits the tetramer. Each RuvB hexamer is contacted by two RuvA subunits (via domain III) on 2 adjacent RuvB subunits; this complex drives branch migration. In the full resolvosome a probable DNA-RuvA(4)-RuvB(12)-RuvC(2) complex forms which resolves the HJ.

Its subcellular location is the cytoplasm. Its function is as follows. The RuvA-RuvB-RuvC complex processes Holliday junction (HJ) DNA during genetic recombination and DNA repair, while the RuvA-RuvB complex plays an important role in the rescue of blocked DNA replication forks via replication fork reversal (RFR). RuvA specifically binds to HJ cruciform DNA, conferring on it an open structure. The RuvB hexamer acts as an ATP-dependent pump, pulling dsDNA into and through the RuvAB complex. HJ branch migration allows RuvC to scan DNA until it finds its consensus sequence, where it cleaves and resolves the cruciform DNA. The chain is Holliday junction branch migration complex subunit RuvA from Mycolicibacterium smegmatis (strain ATCC 700084 / mc(2)155) (Mycobacterium smegmatis).